We begin with the raw amino-acid sequence, 266 residues long: Undecaprenyl-diphosphatase (266 aa).

A run of 8 helical transmembrane segments spans residues 1–21, 39–59, 83–103, 111–131, 149–169, 183–203, 218–238, and 246–266; these read MDTL…FLPI, QGLS…VIYF, SKLA…GFTA, LRGP…LWFA, ALLI…RSGI, AAAR…ALLM, ALAL…YFFL, and MTPF…FIYL.

This sequence belongs to the UppP family.

The protein localises to the cell inner membrane. The enzyme catalyses di-trans,octa-cis-undecaprenyl diphosphate + H2O = di-trans,octa-cis-undecaprenyl phosphate + phosphate + H(+). In terms of biological role, catalyzes the dephosphorylation of undecaprenyl diphosphate (UPP). Confers resistance to bacitracin. This chain is Undecaprenyl-diphosphatase, found in Shewanella amazonensis (strain ATCC BAA-1098 / SB2B).